Consider the following 68-residue polypeptide: Molybdenum-pterin-binding protein 2 (68 aa).

The Mop domain maps to 2–68 (SISARNQLKG…VKSTDVMILA (67 aa)).

Functionally, binds one mole of molybdenum per mole of protein and contains a pterin. The polypeptide is Molybdenum-pterin-binding protein 2 (mopII) (Clostridium pasteurianum).